The chain runs to 445 residues: Adenine permease AdeP (445 aa).

The Cytoplasmic portion of the chain corresponds to 1–28 (MSHQHTTQTSGQGMLERVFKLREHGTTA). A helical membrane pass occupies residues 29-52 (RTEVIAGFTTFLTMVYIVFVNPQI). Over 53 to 62 (LGVAGMDTSA) the chain is Periplasmic. The helical transmembrane segment at 63–81 (VFVTTCLIAAFGSIMMGLF) threads the bilayer. Topologically, residues 82–83 (AN) are cytoplasmic. Residues 84–100 (LPVALAPAMGLNAFFAF) form a discontinuously helical membrane-spanning segment. The Periplasmic portion of the chain corresponds to 101–112 (VVVQAMGLPWQV). The helical transmembrane segment at 113–132 (GMGAIFWGAIGLLLLTIFRV) threads the bilayer. Topologically, residues 133–144 (RYWMIANIPVSL) are cytoplasmic. The helical transmembrane segment at 145 to 165 (RVGITSGIGLFIGMMGLKNAG) threads the bilayer. Residues 166–181 (VIVANPETLVSIGNLT) lie on the Periplasmic side of the membrane. A helical transmembrane segment spans residues 182–199 (SHSVLLGILGFFIIAILA). Residues 200–203 (SRNI) lie on the Cytoplasmic side of the membrane. A helical membrane pass occupies residues 204-222 (HAAVLVSIVVTTLLGWMLG). The Periplasmic portion of the chain corresponds to 223–250 (DVHYNGIVSAPPSVMTVVGHVDLAGSFN). The chain crosses the membrane as a helical span at residues 251 to 279 (LGLAGVIFSFMLVNLFDSSGTLIGVTDKA). Residues 280–292 (GLADEKGKFPRMK) are Cytoplasmic-facing. A helical membrane pass occupies residues 293–308 (QALYVDSISSVTGSFI). Residues 309–310 (GT) are Periplasmic-facing. A discontinuously helical transmembrane segment spans residues 311–326 (SSVTAYIESSSGVSVG). The Cytoplasmic segment spans residues 327–330 (GRTG). A helical membrane pass occupies residues 331-345 (LTAVVVGLLFLLVIF). The Periplasmic portion of the chain corresponds to 346-356 (LSPLAGMVPGY). Residues 357–376 (AAAGALIYVGVLMTSSLARV) form a helical membrane-spanning segment. Residues 377–381 (NWQDL) are Cytoplasmic-facing. Positions 382-417 (TESVPAFITAVMMPFSFSITEGIALGFISYCVMKIG) form an intramembrane region, discontinuously helical. Over 418–445 (TGRLRDLSPCVIIVALLFILKIVFIDAH) the chain is Cytoplasmic.

It belongs to the nucleobase:cation symporter-2 (NCS2) (TC 2.A.40) family. Azg-like subfamily.

Its subcellular location is the cell inner membrane. With respect to regulation, internal adenine may inhibit transport. Its function is as follows. High-affinity transporter for adenine. The sequence is that of Adenine permease AdeP (adeP) from Escherichia coli (strain K12).